Consider the following 644-residue polypeptide: Tripeptidyl-peptidase sed1 (644 aa).

An N-terminal signal peptide occupies residues Met-1–Ala-18. Positions Ser-19–Phe-196 are cleaved as a propeptide — removed in mature form. The 420-residue stretch at Ala-224–Leu-643 folds into the Peptidase S53 domain. Asn-235 carries N-linked (GlcNAc...) asparagine glycosylation. Catalysis depends on charge relay system residues Glu-300 and Asp-304. N-linked (GlcNAc...) asparagine glycosylation is found at Asn-326, Asn-332, and Asn-519. Ser-561 serves as the catalytic Charge relay system. Residues Asp-602, Ile-603, Gly-621, and Asp-623 each coordinate Ca(2+).

Requires Ca(2+) as cofactor. Post-translationally, N-glycosylated.

The protein localises to the secreted. Its subcellular location is the extracellular space. It carries out the reaction Release of an N-terminal tripeptide from a polypeptide.. Its function is as follows. Secreted tripeptidyl-peptidase which degrades proteins at acidic pHs and is involved in virulence. This Aspergillus fumigatus (strain ATCC MYA-4609 / CBS 101355 / FGSC A1100 / Af293) (Neosartorya fumigata) protein is Tripeptidyl-peptidase sed1 (sed1).